Here is a 60-residue protein sequence, read N- to C-terminus: UPF0434 protein YcaR (60 aa).

It belongs to the UPF0434 family.

The chain is UPF0434 protein YcaR from Escherichia coli O81 (strain ED1a).